Reading from the N-terminus, the 95-residue chain is Cell division protein FtsB (95 aa).

Topologically, residues 1-3 (MKW) are cytoplasmic. Residues 4 to 21 (VTGLLVVLLLGLQYKLWI) traverse the membrane as a helical segment. At 22–95 (GEGSVAEVWQ…QVVGRPGETP (74 aa)) the chain is on the periplasmic side. A coiled-coil region spans residues 26–73 (VAEVWQLRQTLEAQRAENEELRYRNAALDAEVTDLKTGLDAIEERARR).

It belongs to the FtsB family. In terms of assembly, part of a complex composed of FtsB, FtsL and FtsQ.

The protein localises to the cell inner membrane. Essential cell division protein. May link together the upstream cell division proteins, which are predominantly cytoplasmic, with the downstream cell division proteins, which are predominantly periplasmic. The sequence is that of Cell division protein FtsB from Thioalkalivibrio sulfidiphilus (strain HL-EbGR7).